The primary structure comprises 232 residues: Large ribosomal subunit protein uL1 (232 aa).

Belongs to the universal ribosomal protein uL1 family. Part of the 50S ribosomal subunit.

Binds directly to 23S rRNA. The L1 stalk is quite mobile in the ribosome, and is involved in E site tRNA release. Functionally, protein L1 is also a translational repressor protein, it controls the translation of the L11 operon by binding to its mRNA. The sequence is that of Large ribosomal subunit protein uL1 from Pelotomaculum thermopropionicum (strain DSM 13744 / JCM 10971 / SI).